Reading from the N-terminus, the 296-residue chain is Phosphoribosylaminoimidazole-succinocarboxamide synthase (296 aa).

It belongs to the SAICAR synthetase family.

The enzyme catalyses 5-amino-1-(5-phospho-D-ribosyl)imidazole-4-carboxylate + L-aspartate + ATP = (2S)-2-[5-amino-1-(5-phospho-beta-D-ribosyl)imidazole-4-carboxamido]succinate + ADP + phosphate + 2 H(+). It functions in the pathway purine metabolism; IMP biosynthesis via de novo pathway; 5-amino-1-(5-phospho-D-ribosyl)imidazole-4-carboxamide from 5-amino-1-(5-phospho-D-ribosyl)imidazole-4-carboxylate: step 1/2. The sequence is that of Phosphoribosylaminoimidazole-succinocarboxamide synthase from Geobacter metallireducens (strain ATCC 53774 / DSM 7210 / GS-15).